A 394-amino-acid polypeptide reads, in one-letter code: Elongation factor Tu 1 (394 aa).

Residues 9-204 (KPHCNIGTIG…AIDDYIPQPT (196 aa)) enclose the tr-type G domain. The tract at residues 18–25 (GHVDHGKT) is G1. 18 to 25 (GHVDHGKT) is a GTP binding site. A Mg(2+)-binding site is contributed by Thr25. The interval 61 to 65 (GITIQ) is G2. The interval 82 to 85 (DCPG) is G3. GTP-binding positions include 82-86 (DCPGH) and 137-140 (NKID). Positions 137–140 (NKID) are G4. Positions 174 to 176 (SAL) are G5.

It belongs to the TRAFAC class translation factor GTPase superfamily. Classic translation factor GTPase family. EF-Tu/EF-1A subfamily. As to quaternary structure, monomer.

The protein localises to the cytoplasm. The catalysed reaction is GTP + H2O = GDP + phosphate + H(+). Its function is as follows. GTP hydrolase that promotes the GTP-dependent binding of aminoacyl-tRNA to the A-site of ribosomes during protein biosynthesis. The sequence is that of Elongation factor Tu 1 from Orientia tsutsugamushi (strain Boryong) (Rickettsia tsutsugamushi).